The following is a 368-amino-acid chain: 3-dehydroquinate synthase (368 aa).

NAD(+) is bound by residues 71-76 (DGESFK), 105-109 (GVIGD), 129-130 (TT), Lys142, Lys151, and 169-172 (TLRT). Positions 184, 247, and 264 each coordinate Zn(2+).

It belongs to the sugar phosphate cyclases superfamily. Dehydroquinate synthase family. The cofactor is Co(2+). Zn(2+) serves as cofactor. It depends on NAD(+) as a cofactor.

The protein resides in the cytoplasm. It carries out the reaction 7-phospho-2-dehydro-3-deoxy-D-arabino-heptonate = 3-dehydroquinate + phosphate. The protein operates within metabolic intermediate biosynthesis; chorismate biosynthesis; chorismate from D-erythrose 4-phosphate and phosphoenolpyruvate: step 2/7. Its function is as follows. Catalyzes the conversion of 3-deoxy-D-arabino-heptulosonate 7-phosphate (DAHP) to dehydroquinate (DHQ). This is 3-dehydroquinate synthase from Ralstonia pickettii (strain 12J).